Reading from the N-terminus, the 274-residue chain is 2-dehydro-3-deoxyphosphooctonate aldolase (274 aa).

The protein belongs to the KdsA family.

Its subcellular location is the cytoplasm. The enzyme catalyses D-arabinose 5-phosphate + phosphoenolpyruvate + H2O = 3-deoxy-alpha-D-manno-2-octulosonate-8-phosphate + phosphate. Its pathway is carbohydrate biosynthesis; 3-deoxy-D-manno-octulosonate biosynthesis; 3-deoxy-D-manno-octulosonate from D-ribulose 5-phosphate: step 2/3. It participates in bacterial outer membrane biogenesis; lipopolysaccharide biosynthesis. This is 2-dehydro-3-deoxyphosphooctonate aldolase from Rickettsia peacockii (strain Rustic).